We begin with the raw amino-acid sequence, 342 residues long: [Citrate [pro-3S]-lyase] ligase (342 aa).

Residues 1–127 form the N-acetyltransferase domain; sequence MTLILKRVQL…RAVLMENSRE (127 aa).

It carries out the reaction holo-[citrate lyase ACP] + acetate + ATP = acetyl-[citrate lyase ACP] + AMP + diphosphate. Its function is as follows. Acetylation of prosthetic group (2-(5''-phosphoribosyl)-3'-dephosphocoenzyme-A) of the gamma subunit of citrate lyase. This is [Citrate [pro-3S]-lyase] ligase (citC) from Klebsiella pneumoniae.